The primary structure comprises 210 residues: Guanylate kinase (210 aa).

The region spanning 5–183 (GILFVISAPS…AVEEFKSIIL (179 aa)) is the Guanylate kinase-like domain. 12-19 (APSGAGKT) provides a ligand contact to ATP.

The protein belongs to the guanylate kinase family.

It is found in the cytoplasm. It catalyses the reaction GMP + ATP = GDP + ADP. In terms of biological role, essential for recycling GMP and indirectly, cGMP. This chain is Guanylate kinase, found in Syntrophotalea carbinolica (strain DSM 2380 / NBRC 103641 / GraBd1) (Pelobacter carbinolicus).